The sequence spans 420 residues: UDP-N-acetylglucosamine 1-carboxyvinyltransferase (420 aa).

Position 22 to 23 (Lys22 to Asn23) interacts with phosphoenolpyruvate. Arg91 is a UDP-N-acetyl-alpha-D-glucosamine binding site. Cys115 (proton donor) is an active-site residue. A 2-(S-cysteinyl)pyruvic acid O-phosphothioketal modification is found at Cys115. Residues Arg120 to Leu124, Lys160 to Val163, Asp305, and Ile327 contribute to the UDP-N-acetyl-alpha-D-glucosamine site.

The protein belongs to the EPSP synthase family. MurA subfamily.

Its subcellular location is the cytoplasm. The catalysed reaction is phosphoenolpyruvate + UDP-N-acetyl-alpha-D-glucosamine = UDP-N-acetyl-3-O-(1-carboxyvinyl)-alpha-D-glucosamine + phosphate. Its pathway is cell wall biogenesis; peptidoglycan biosynthesis. Its function is as follows. Cell wall formation. Adds enolpyruvyl to UDP-N-acetylglucosamine. The sequence is that of UDP-N-acetylglucosamine 1-carboxyvinyltransferase from Pectobacterium atrosepticum (strain SCRI 1043 / ATCC BAA-672) (Erwinia carotovora subsp. atroseptica).